Consider the following 1415-residue polypeptide: DNA-directed RNA polymerase subunit beta' (1415 aa).

Positions 72, 74, 87, and 90 each coordinate Zn(2+). Mg(2+) is bound by residues Asp463, Asp465, and Asp467. Cys812, Cys886, Cys893, and Cys896 together coordinate Zn(2+).

The protein belongs to the RNA polymerase beta' chain family. As to quaternary structure, the RNAP catalytic core consists of 2 alpha, 1 beta, 1 beta' and 1 omega subunit. When a sigma factor is associated with the core the holoenzyme is formed, which can initiate transcription. Requires Mg(2+) as cofactor. Zn(2+) serves as cofactor.

It carries out the reaction RNA(n) + a ribonucleoside 5'-triphosphate = RNA(n+1) + diphosphate. DNA-dependent RNA polymerase catalyzes the transcription of DNA into RNA using the four ribonucleoside triphosphates as substrates. The sequence is that of DNA-directed RNA polymerase subunit beta' from Dinoroseobacter shibae (strain DSM 16493 / NCIMB 14021 / DFL 12).